A 292-amino-acid polypeptide reads, in one-letter code: uncharacterized protein (292 aa).

This is an uncharacterized protein from Acanthamoeba polyphaga (Amoeba).